The sequence spans 337 residues: Junctional sarcoplasmic reticulum protein 1 (337 aa).

Residues 1-84 (MATRAMEELD…EKEPVSKVTS (84 aa)) form a mediates interaction with CACNA1S region. Disordered regions lie at residues 23-125 (SALA…ELPW) and 159-337 (EAPA…KGRD). 2 stretches are compositionally biased toward basic and acidic residues: residues 49–59 (SRSHDSQERVT) and 69–79 (TKPKKMEKEPV). Over residues 165–180 (PESWASSSSSPKGPAS) the composition is skewed to low complexity. The span at 199 to 213 (SKLEERVQIPRSEEA) shows a compositional bias: basic and acidic residues. A compositionally biased stretch (acidic residues) spans 214–225 (AEKDEWESEEAA). 3 stretches are compositionally biased toward basic and acidic residues: residues 236 to 277 (GPKE…RGAR), 285 to 309 (RRWE…DRKR), and 316 to 325 (RRPDEEDRPL). A compositionally biased stretch (basic residues) spans 326 to 337 (GRQKRRAGKGRD).

As to quaternary structure, interacts with CACNA1S, CACNB1 and calsequestrin.

The protein resides in the sarcoplasmic reticulum membrane. It is found in the endoplasmic reticulum membrane. Involved in skeletal muscle excitation/contraction coupling (EC), probably acting as a regulator of the voltage-sensitive calcium channel CACNA1S. EC is a physiological process whereby an electrical signal (depolarization of the plasma membrane) is converted into a chemical signal, a calcium gradient, by the opening of ryanodine receptor calcium release channels. May regulate CACNA1S membrane targeting and activity. The chain is Junctional sarcoplasmic reticulum protein 1 (JSRP1) from Bos taurus (Bovine).